The sequence spans 323 residues: Phospho-N-acetylmuramoyl-pentapeptide-transferase (323 aa).

Transmembrane regions (helical) follow at residues 5–25 (SAVL…PSLI), 57–77 (LLFI…QGLI), 81–101 (LWAL…DDSI), 118–138 (LCQV…GFQM), 140–160 (FGTT…IVGF), 173–193 (LVSG…LVNL), 196–216 (PGYP…LGFF), 225–247 (IFMG…LLLH), and 302–322 (IVFW…ILLV).

Belongs to the glycosyltransferase 4 family. MraY subfamily. The cofactor is Mg(2+).

Its subcellular location is the cell membrane. It carries out the reaction UDP-N-acetyl-alpha-D-muramoyl-L-alanyl-gamma-D-glutamyl-L-lysyl-D-alanyl-D-alanine + di-trans,octa-cis-undecaprenyl phosphate = Mur2Ac(oyl-L-Ala-gamma-D-Glu-L-Lys-D-Ala-D-Ala)-di-trans,octa-cis-undecaprenyl diphosphate + UMP. Its pathway is cell wall biogenesis; peptidoglycan biosynthesis. Functionally, catalyzes the initial step of the lipid cycle reactions in the biosynthesis of the cell wall peptidoglycan: transfers peptidoglycan precursor phospho-MurNAc-pentapeptide from UDP-MurNAc-pentapeptide onto the lipid carrier undecaprenyl phosphate, yielding undecaprenyl-pyrophosphoryl-MurNAc-pentapeptide, known as lipid I. In Limosilactobacillus reuteri (strain DSM 20016) (Lactobacillus reuteri), this protein is Phospho-N-acetylmuramoyl-pentapeptide-transferase.